The primary structure comprises 472 residues: UDP-glucosyltransferase 103 (472 aa).

The active-site Proton acceptor is H15. Residue H15 coordinates an anthocyanidin. D117 acts as the Charge relay in catalysis. Positions 344, 346, 361, 364, 365, 366, and 369 each coordinate UDP-alpha-D-glucose. G384 contacts an anthocyanidin. UDP-alpha-D-glucose-binding residues include E385 and Q386.

It belongs to the UDP-glycosyltransferase family.

The catalysed reaction is (20S)-ginsenoside F1 + UDP-alpha-D-glucose = (20S)-ginsenoside Rg1 + UDP + H(+). It functions in the pathway secondary metabolite biosynthesis; terpenoid biosynthesis. Functionally, probable component of the triterpene saponins (e.g. ginsenosides) biosynthetic pathway. No detectable activity toward protopanaxatriol (PPT). The polypeptide is UDP-glucosyltransferase 103 (Panax ginseng (Korean ginseng)).